Here is a 511-residue protein sequence, read N- to C-terminus: Inositol-3-phosphate synthase (511 aa).

Residues G70, N71, N72, D143, S179, I180, Q190, R193, S230, A231, N232, T233, G281, S282, D306, T309, N340, N341, D342, K355, G393, D394, D422, and S423 each coordinate NAD(+).

It belongs to the myo-inositol 1-phosphate synthase family. NAD(+) serves as cofactor.

The protein resides in the cytoplasm. It carries out the reaction D-glucose 6-phosphate = 1D-myo-inositol 3-phosphate. It participates in polyol metabolism; myo-inositol biosynthesis; myo-inositol from D-glucose 6-phosphate: step 1/2. Key enzyme in myo-inositol biosynthesis pathway that catalyzes the conversion of glucose 6-phosphate to 1-myo-inositol 1-phosphate in a NAD-dependent manner. Rate-limiting enzyme in the synthesis of all inositol-containing compounds. This chain is Inositol-3-phosphate synthase (ino1), found in Dictyostelium discoideum (Social amoeba).